Reading from the N-terminus, the 268-residue chain is Diaminopimelate epimerase (268 aa).

Asn13, Gln46, and Asn64 together coordinate substrate. Catalysis depends on Cys73, which acts as the Proton donor. Residues 74–75, Asn148, Asn181, and 199–200 each bind substrate; these read GN and ER. Cys208 acts as the Proton acceptor in catalysis. 209–210 contributes to the substrate binding site; sequence GT.

This sequence belongs to the diaminopimelate epimerase family. In terms of assembly, homodimer.

The protein localises to the cytoplasm. It catalyses the reaction (2S,6S)-2,6-diaminopimelate = meso-2,6-diaminopimelate. It functions in the pathway amino-acid biosynthesis; L-lysine biosynthesis via DAP pathway; DL-2,6-diaminopimelate from LL-2,6-diaminopimelate: step 1/1. Its function is as follows. Catalyzes the stereoinversion of LL-2,6-diaminopimelate (L,L-DAP) to meso-diaminopimelate (meso-DAP), a precursor of L-lysine and an essential component of the bacterial peptidoglycan. This is Diaminopimelate epimerase from Sphingopyxis alaskensis (strain DSM 13593 / LMG 18877 / RB2256) (Sphingomonas alaskensis).